The chain runs to 304 residues: Olfactory receptor 4K13 (304 aa).

The Extracellular segment spans residues 1 to 25 (MERANHSVVSEFILLGLSKSQNLQI). Asparagine 5 carries N-linked (GlcNAc...) asparagine glycosylation. Residues 26 to 49 (LFFLGFSVVFVGIVLGNLLILVTV) traverse the membrane as a helical segment. The Cytoplasmic portion of the chain corresponds to 50–57 (TFDSLLHT). A helical membrane pass occupies residues 58–79 (PMYFLLSNLSCIDMILASFATP). Residues 80–100 (KMIVDFLRERKTISWWGCYSQ) lie on the Extracellular side of the membrane. The cysteines at positions 97 and 189 are disulfide-linked. The chain crosses the membrane as a helical span at residues 101-120 (MFFMHLLGGSEMMLLVAMAI). At 121-139 (DRYVAICKPLHYMTIMSPR) the chain is on the cytoplasmic side. Residues 140–158 (VLTGLLLSSYAVGFVHSSS) form a helical membrane-spanning segment. Residues 159–195 (QMAFMLTLPFCGPNVIDSFFCDLPLVIKLACKDTYIL) are Extracellular-facing. Residues 196 to 219 (QLLVIADSGLLSLVCFLLLLVSYG) form a helical membrane-spanning segment. Over 220 to 235 (VIIFSVRYRAASRSSK) the chain is Cytoplasmic. The helical transmembrane segment at 236 to 258 (AFSTLSAHITVVTLFFAPCVFIY) threads the bilayer. Topologically, residues 259–269 (VWPFSRYSVDK) are extracellular. The helical transmembrane segment at 270-289 (ILSVFYTIFTPLLNPIIYTL) threads the bilayer. Topologically, residues 290–304 (RNQEVKAAIKKRLCI) are cytoplasmic.

The protein belongs to the G-protein coupled receptor 1 family.

The protein resides in the cell membrane. Its function is as follows. Odorant receptor. The protein is Olfactory receptor 4K13 (OR4K13) of Homo sapiens (Human).